Here is a 438-residue protein sequence, read N- to C-terminus: Battenin (438 aa).

Residues 1–27 are disordered; the sequence is MGSSAGSWRRLEDSEREETDSEPQAPR. At 1–37 the chain is on the cytoplasmic side; sequence MGSSAGSWRRLEDSEREETDSEPQAPRLDSRSVLWKN. At S14 the chain carries Phosphoserine. The helical transmembrane segment at 38–58 threads the bilayer; that stretch reads AVGFWILGLCNNFSYVVMLSA. Over 59–127 the chain is Lumenal; sequence AHDILKQEQA…GLHLLPYSPR (69 aa). A disordered region spans residues 67–87; sequence QASGNQSHVEPGPTPTPHNSS. 2 N-linked (GlcNAc...) asparagine glycosylation sites follow: N71 and N85. The chain crosses the membrane as a helical span at residues 128–148; it reads VLVSGVCSAGSFVLVAFSQSV. Residues 149–151 are Cytoplasmic-facing; that stretch reads GLS. Residues 152 to 172 form a helical membrane-spanning segment; the sequence is LCGVVLASISSGLGEVTFLSL. Residues 173 to 182 lie on the Lumenal side of the membrane; that stretch reads TAFYPSAVIS. Residues 183-203 traverse the membrane as a helical segment; the sequence is WWSSGTGGAGLLGSLSYLGLT. Residues 204–277 lie on the Cytoplasmic side of the membrane; the sequence is QAGLSPQHTL…DLSLQERWTV (74 aa). The disordered stretch occupies residues 239–261; sequence PGGENEAETAARQPLIGTETPES. The Lysosomal targeting motif signature appears at 242–244; sequence ENE. The short motif at 253–254 is the Lysosomal targeting motif. Required for AP1G1, AP2A2 and AP3D1 interaction element; it reads LI. Residues 278 to 298 traverse the membrane as a helical segment; that stretch reads FKGLLWYIIPLVLVYFAEYFI. Residues 299 to 346 lie on the Lumenal side of the membrane; that stretch reads NQGLFELLFFRNTSLSHAQQYRWYQMLYQAGVFASRSSLQCCRIRFTW. The N-linked (GlcNAc...) asparagine glycan is linked to N310. Residues 347–367 form a helical membrane-spanning segment; it reads VLALLQCLNLALLLADVCLNF. Over 368–438 the chain is Cytoplasmic; the sequence is LPSIYLIFII…PLHDFLCHLP (71 aa). The Lysosomal targeting motif signature appears at 409–419; the sequence is MEAACISDTLG. The residue at position 435 (C435) is a Cysteine methyl ester. Residue C435 is the site of S-farnesyl cysteine attachment. A propeptide spans 436–438 (removed in mature form); sequence HLP.

Belongs to the battenin family. Homooligomer. Interacts with DCTN1, KIF3A, RAB7A and RILP. Interacts with CLN5. Interacts with KCNIP3. In terms of processing, highly glycosylated. Farnesylation is important for trafficking to lysosomes. As to expression, expressed throughout the brain, such as, in the cerebral cortex, hippocampus, cerebellum and several different cerebral nuclei (at protein level). In the cerebral cortex, expressed in all cortical layers. In the hippocampus, expressed in the granule cells in the dentate gyrus and the pyramidal cells of the hippocampus proper. In the cerebellum expressed in the granular and molecular layers, and in the Purkinje cell layer.

It is found in the lysosome membrane. Its subcellular location is the late endosome. The protein localises to the lysosome. It localises to the membrane raft. The protein resides in the golgi apparatus. It is found in the trans-Golgi network. Its subcellular location is the synapse. The protein localises to the synaptosome. It localises to the early endosome membrane. The protein resides in the late endosome membrane. It is found in the cytoplasmic vesicle. Its subcellular location is the autophagosome. Functionally, mediates microtubule-dependent, anterograde transport connecting the Golgi network, endosomes, autophagosomes, lysosomes and plasma membrane, and participates in several cellular processes such as regulation of lysosomal pH, lysosome protein degradation, receptor-mediated endocytosis, autophagy, transport of proteins and lipids from the TGN, apoptosis and synaptic transmission. Facilitates the proteins transport from trans-Golgi network (TGN)-to other membrane compartments such as transport of microdomain-associated proteins to the plasma membrane, IGF2R transport to the lysosome where it regulates the CTSD release leading to regulation of CTSD maturation and thereby APP intracellular processing. Moreover regulates CTSD activity in response to osmotic stress. Also binds galactosylceramide and transports it from the trans Golgi to the rafts, which may have immediate and downstream effects on cell survival by modulating ceramide synthesis. At the plasma membrane, regulates actin-dependent events including filopodia formation, cell migration, and pinocytosis through ARF1-CDC42 pathway and also the cytoskeleton organization through interaction with MYH10 and fodrin leading to the regulation of the plasma membrane association of Na+, K+ ATPase complex. Regulates synaptic transmission in the amygdala, hippocampus, and cerebellum through regulation of synaptic vesicles density and their proximity to active zones leading to modulation of short-term plasticity and age-dependent anxious behavior, learning and memory. Regulates autophagic vacuoles (AVs) maturation by modulating the trafficking between endocytic and autophagolysosomal/lysosomal compartments, which involves vesicle fusion leading to regulation of degradation process. Also participates in cellular homeostasis of compounds such as, water, ions, amino acids, proteins and lipids in several tissue namely in brain and kidney through regulation of their transport and synthesis. In Mus musculus (Mouse), this protein is Battenin.